The following is a 501-amino-acid chain: Aldehyde dehydrogenase, cytosolic 1 (501 aa).

S2 carries the post-translational modification N-acetylserine. K91 and K128 each carry N6-acetyllysine. 246-251 (GSTEVG) contributes to the NAD(+) binding site. Position 252 is an N6-acetyllysine (K252). The active-site Proton acceptor is the E269. C303 (nucleophile) is an active-site residue. 3 positions are modified to N6-acetyllysine: K353, K367, and K410. Residue S413 is modified to Phosphoserine. An N6-acetyllysine mark is found at K419, K435, and K495.

It belongs to the aldehyde dehydrogenase family. In terms of assembly, homotetramer. In terms of tissue distribution, very low levels in lung and liver.

The protein localises to the cytoplasm. The enzyme catalyses an aldehyde + NAD(+) + H2O = a carboxylate + NADH + 2 H(+). It functions in the pathway alcohol metabolism; ethanol degradation; acetate from ethanol: step 2/2. Can oxidize benzaldehyde, propionaldehyde and acetaldehyde. No detectable activity with retinal. The polypeptide is Aldehyde dehydrogenase, cytosolic 1 (Aldh1a7) (Rattus norvegicus (Rat)).